We begin with the raw amino-acid sequence, 206 residues long: Ras-related protein Rab-7b (206 aa).

15 to 22 (GDSGVGKT) is a GTP binding site. Phosphoserine occurs at positions 17 and 23. A phosphothreonine mark is found at T34, T40, and T64. GTP is bound by residues 34 to 40 (TQQYRAT) and 63 to 67 (DTAGQ). Positions 37–45 (YRATVGADF) match the Effector region motif. S72 is subject to Phosphoserine. A phosphotyrosine mark is found at Y78 and Y88. Residues 125 to 128 (NKLD) and 157 to 158 (AK) contribute to the GTP site. S-geranylgeranyl cysteine attachment occurs at residues C205 and C206.

It belongs to the small GTPase superfamily. Rab family. Glycosylated.

The protein localises to the cytoplasm. It localises to the cytoskeleton. This Paramecium octaurelia protein is Ras-related protein Rab-7b.